Reading from the N-terminus, the 172-residue chain is Biogenesis of lysosome-related organelles complex 1 subunit 6 (172 aa).

The segment covering 1 to 10 (MNVPVPPPPD) has biased composition (pro residues). 2 disordered regions span residues 1 to 35 (MNVP…RSPD) and 136 to 172 (ALKL…AKRT). Residues 143 to 164 (RQKEELEREQQREREFEREKQL) show a composition bias toward basic and acidic residues.

Belongs to the BLOC1S6 family. As to quaternary structure, homodimer. Octamer composed of one copy each BLOC1S1, BLOC1S2, BLOC1S3, BLOC1S4, BLOC1S5, BLOC1S6, DTNBP1/BLOC1S7 and SNAPIN/BLOC1S8. The BLOC-1 complex associates with the AP-3 protein complex and membrane protein cargos. Interacts with BLOC1S4, BLOC1S5, DTNBP1/BLOC1S7, F-actin, SNAP25 isoform 1 and isoform 2, SNAP47 and STX12. Component of the biogenesis of lysosome-related organelles complex 1 (BLOC-1) composed of BLOC1S1, BLOC1S2, BLOC1S3, BLOC1S4, BLOC1S5, BLOC1S6, DTNBP1/BLOC1S7 and SNAPIN/BLOC1S8.

The protein resides in the cytoplasm. The protein localises to the membrane. Functionally, component of the BLOC-1 complex, a complex that is required for normal biogenesis of lysosome-related organelles (LRO), such as platelet dense granules and melanosomes. In concert with the AP-3 complex, the BLOC-1 complex is required to target membrane protein cargos into vesicles assembled at cell bodies for delivery into neurites and nerve terminals. The BLOC-1 complex, in association with SNARE proteins, is also proposed to be involved in neurite extension. May play a role in intracellular vesicle trafficking, particularly in the vesicle-docking and fusion process. This chain is Biogenesis of lysosome-related organelles complex 1 subunit 6 (Bloc1s6), found in Rattus norvegicus (Rat).